The following is a 310-amino-acid chain: Homocysteine S-methyltransferase (310 aa).

The Hcy-binding domain occupies 1–310; the sequence is MSQNNPLRAL…ADIAALKARS (310 aa). The Zn(2+) site is built by cysteine 229, cysteine 295, and cysteine 296.

In terms of assembly, monomer. Zn(2+) is required as a cofactor.

The catalysed reaction is S-methyl-L-methionine + L-homocysteine = 2 L-methionine + H(+). Its function is as follows. Catalyzes methyl transfer from S-methylmethionine or S-adenosylmethionine (less efficient) to homocysteine, selenohomocysteine and less efficiently selenocysteine. The polypeptide is Homocysteine S-methyltransferase (mmuM) (Escherichia coli (strain K12)).